Reading from the N-terminus, the 163-residue chain is Transcription antitermination protein NusB (163 aa).

The protein belongs to the NusB family.

Its function is as follows. Involved in transcription antitermination. Required for transcription of ribosomal RNA (rRNA) genes. Binds specifically to the boxA antiterminator sequence of the ribosomal RNA (rrn) operons. This is Transcription antitermination protein NusB from Mycolicibacterium vanbaalenii (strain DSM 7251 / JCM 13017 / BCRC 16820 / KCTC 9966 / NRRL B-24157 / PYR-1) (Mycobacterium vanbaalenii).